We begin with the raw amino-acid sequence, 352 residues long: Putative F-box protein At5g14160 (352 aa).

One can recognise an F-box domain in the interval 14–60; the sequence is GVDWSELPEDVIRLVLRRLRLSDFHRARAVCSTWCRVWGDCVSKPNQ.

The polypeptide is Putative F-box protein At5g14160 (Arabidopsis thaliana (Mouse-ear cress)).